We begin with the raw amino-acid sequence, 493 residues long: Glutamate--tRNA ligase (493 aa).

A 'HIGH' region motif is present at residues 10–20 (PSPTGDPHVGT). A 'KMSKS' region motif is present at residues 251–255 (KLSKR). Lys254 is a binding site for ATP.

The protein belongs to the class-I aminoacyl-tRNA synthetase family. Glutamate--tRNA ligase type 1 subfamily. Monomer.

Its subcellular location is the cytoplasm. The enzyme catalyses tRNA(Glu) + L-glutamate + ATP = L-glutamyl-tRNA(Glu) + AMP + diphosphate. Functionally, catalyzes the attachment of glutamate to tRNA(Glu) in a two-step reaction: glutamate is first activated by ATP to form Glu-AMP and then transferred to the acceptor end of tRNA(Glu). This is Glutamate--tRNA ligase from Pseudomonas fluorescens (strain Pf0-1).